The following is a 361-amino-acid chain: Phosphoserine aminotransferase (361 aa).

L-glutamate is bound by residues Ser-9 and Arg-42. Pyridoxal 5'-phosphate-binding positions include 76–77 (AR), Trp-102, Thr-153, Asp-173, and Gln-196. Residue Lys-197 is modified to N6-(pyridoxal phosphate)lysine. 238-239 (NT) is a binding site for pyridoxal 5'-phosphate.

It belongs to the class-V pyridoxal-phosphate-dependent aminotransferase family. SerC subfamily. As to quaternary structure, homodimer. Requires pyridoxal 5'-phosphate as cofactor.

The protein localises to the cytoplasm. The catalysed reaction is O-phospho-L-serine + 2-oxoglutarate = 3-phosphooxypyruvate + L-glutamate. It catalyses the reaction 4-(phosphooxy)-L-threonine + 2-oxoglutarate = (R)-3-hydroxy-2-oxo-4-phosphooxybutanoate + L-glutamate. Its pathway is amino-acid biosynthesis; L-serine biosynthesis; L-serine from 3-phospho-D-glycerate: step 2/3. It functions in the pathway cofactor biosynthesis; pyridoxine 5'-phosphate biosynthesis; pyridoxine 5'-phosphate from D-erythrose 4-phosphate: step 3/5. In terms of biological role, catalyzes the reversible conversion of 3-phosphohydroxypyruvate to phosphoserine and of 3-hydroxy-2-oxo-4-phosphonooxybutanoate to phosphohydroxythreonine. This is Phosphoserine aminotransferase from Serratia proteamaculans (strain 568).